The primary structure comprises 431 residues: Histidinol dehydrogenase (431 aa).

NAD(+) contacts are provided by tyrosine 124, glutamine 187, and asparagine 210. The substrate site is built by serine 236, glutamine 258, and histidine 261. Zn(2+)-binding residues include glutamine 258 and histidine 261. Catalysis depends on proton acceptor residues glutamate 325 and histidine 326. Substrate is bound by residues histidine 326, aspartate 359, glutamate 413, and histidine 418. A Zn(2+)-binding site is contributed by aspartate 359. Zn(2+) is bound at residue histidine 418.

This sequence belongs to the histidinol dehydrogenase family. Zn(2+) serves as cofactor.

The catalysed reaction is L-histidinol + 2 NAD(+) + H2O = L-histidine + 2 NADH + 3 H(+). It participates in amino-acid biosynthesis; L-histidine biosynthesis; L-histidine from 5-phospho-alpha-D-ribose 1-diphosphate: step 9/9. Its function is as follows. Catalyzes the sequential NAD-dependent oxidations of L-histidinol to L-histidinaldehyde and then to L-histidine. This Legionella pneumophila subsp. pneumophila (strain Philadelphia 1 / ATCC 33152 / DSM 7513) protein is Histidinol dehydrogenase.